Consider the following 227-residue polypeptide: Ribose-5-phosphate isomerase A (227 aa).

Substrate-binding positions include 26 to 29 (TGST), 82 to 85 (DGAD), and 95 to 98 (KGGG). The active-site Proton acceptor is glutamate 104. Lysine 122 serves as a coordination point for substrate.

This sequence belongs to the ribose 5-phosphate isomerase family. In terms of assembly, homodimer.

The catalysed reaction is aldehydo-D-ribose 5-phosphate = D-ribulose 5-phosphate. It participates in carbohydrate degradation; pentose phosphate pathway; D-ribose 5-phosphate from D-ribulose 5-phosphate (non-oxidative stage): step 1/1. Functionally, catalyzes the reversible conversion of ribose-5-phosphate to ribulose 5-phosphate. This chain is Ribose-5-phosphate isomerase A, found in Streptococcus pyogenes serotype M2 (strain MGAS10270).